A 145-amino-acid chain; its full sequence is Peptide methionine sulfoxide reductase MsrB (145 aa).

The MsrB domain maps to 4–127 (SDELKQRIGD…NSAALKFIPY (124 aa)). The Nucleophile role is filled by cysteine 116.

The protein belongs to the MsrB Met sulfoxide reductase family.

It carries out the reaction L-methionyl-[protein] + [thioredoxin]-disulfide + H2O = L-methionyl-(R)-S-oxide-[protein] + [thioredoxin]-dithiol. The chain is Peptide methionine sulfoxide reductase MsrB from Streptococcus pyogenes serotype M18 (strain MGAS8232).